The chain runs to 153 residues: 6,7-dimethyl-8-ribityllumazine synthase (153 aa).

5-amino-6-(D-ribitylamino)uracil is bound by residues phenylalanine 22, 56-58, and 80-82; these read AFE and AVI. (2S)-2-hydroxy-3-oxobutyl phosphate is bound at residue 85-86; sequence GT. Histidine 88 (proton donor) is an active-site residue. Phenylalanine 113 contributes to the 5-amino-6-(D-ribitylamino)uracil binding site. Residue arginine 127 participates in (2S)-2-hydroxy-3-oxobutyl phosphate binding.

It belongs to the DMRL synthase family. In terms of assembly, forms an icosahedral capsid composed of 60 subunits, arranged as a dodecamer of pentamers.

It catalyses the reaction (2S)-2-hydroxy-3-oxobutyl phosphate + 5-amino-6-(D-ribitylamino)uracil = 6,7-dimethyl-8-(1-D-ribityl)lumazine + phosphate + 2 H2O + H(+). It functions in the pathway cofactor biosynthesis; riboflavin biosynthesis; riboflavin from 2-hydroxy-3-oxobutyl phosphate and 5-amino-6-(D-ribitylamino)uracil: step 1/2. Functionally, catalyzes the formation of 6,7-dimethyl-8-ribityllumazine by condensation of 5-amino-6-(D-ribitylamino)uracil with 3,4-dihydroxy-2-butanone 4-phosphate. This is the penultimate step in the biosynthesis of riboflavin. This is 6,7-dimethyl-8-ribityllumazine synthase from Hydrogenovibrio crunogenus (strain DSM 25203 / XCL-2) (Thiomicrospira crunogena).